The sequence spans 152 residues: Deoxyuridine 5'-triphosphate nucleotidohydrolase (152 aa).

Residues 71 to 73 (RSG), N84, 88 to 90 (LID), and M98 each bind substrate.

It belongs to the dUTPase family. It depends on Mg(2+) as a cofactor.

It catalyses the reaction dUTP + H2O = dUMP + diphosphate + H(+). It participates in pyrimidine metabolism; dUMP biosynthesis; dUMP from dCTP (dUTP route): step 2/2. In terms of biological role, this enzyme is involved in nucleotide metabolism: it produces dUMP, the immediate precursor of thymidine nucleotides and it decreases the intracellular concentration of dUTP so that uracil cannot be incorporated into DNA. The sequence is that of Deoxyuridine 5'-triphosphate nucleotidohydrolase from Shewanella pealeana (strain ATCC 700345 / ANG-SQ1).